The chain runs to 128 residues: Cytochrome c-type biogenesis protein CcmE (128 aa).

The Cytoplasmic segment spans residues 1-8 (MQKRVRNR). A helical; Signal-anchor for type II membrane protein membrane pass occupies residues 9-29 (LITIIICFCSACLGISIILYN). Residues 30 to 128 (LEKNIVFFLP…KHDENYRPPQ (99 aa)) are Periplasmic-facing. 2 residues coordinate heme: H120 and Y124.

It belongs to the CcmE/CycJ family.

Its subcellular location is the cell inner membrane. Functionally, heme chaperone required for the biogenesis of c-type cytochromes. Transiently binds heme delivered by CcmC and transfers the heme to apo-cytochromes in a process facilitated by CcmF and CcmH. The protein is Cytochrome c-type biogenesis protein CcmE of Rickettsia peacockii (strain Rustic).